Reading from the N-terminus, the 277-residue chain is Ethanolamine ammonia-lyase small subunit (277 aa).

Valine 164, glutamate 185, and cysteine 214 together coordinate adenosylcob(III)alamin.

The protein belongs to the EutC family. As to quaternary structure, the basic unit is a heterodimer which dimerizes to form tetramers. The heterotetramers trimerize; 6 large subunits form a core ring with 6 small subunits projecting outwards. The cofactor is adenosylcob(III)alamin.

It is found in the bacterial microcompartment. It carries out the reaction ethanolamine = acetaldehyde + NH4(+). The protein operates within amine and polyamine degradation; ethanolamine degradation. Functionally, catalyzes the deamination of various vicinal amino-alcohols to oxo compounds. Allows this organism to utilize ethanolamine as the sole source of nitrogen and carbon in the presence of external vitamin B12. The polypeptide is Ethanolamine ammonia-lyase small subunit (Pseudomonas fluorescens (strain SBW25)).